The chain runs to 61 residues: FTCFTTPSDTSETCPDGQNICYEKRWNSHQGVEIKGCVASCPEFESRFRYLLCCRIDNCNK.

Disulfide bonds link Cys-3/Cys-21, Cys-14/Cys-37, Cys-41/Cys-53, and Cys-54/Cys-59.

The protein belongs to the three-finger toxin family. Short-chain subfamily. Orphan group VI sub-subfamily. Expressed by the venom gland.

It is found in the secreted. The chain is Weak toxin CM-2 from Naja haje haje (Egyptian cobra).